The primary structure comprises 107 residues: ATP synthase peripheral stalk subunit F6, mitochondrial (107 aa).

The N-terminal 31 residues, 1–31, are a transit peptide targeting the mitochondrion; it reads MILQRLFRFSVIRSAVSVYLRRNIGVTAVAF. An N6-acetyllysine mark is found at Lys40, Lys45, and Lys78. Lys93 and Lys98 each carry N6-acetyllysine; alternate. 2 positions are modified to N6-succinyllysine; alternate: Lys93 and Lys98. Residue Lys104 is modified to N6-acetyllysine.

It belongs to the eukaryotic ATPase subunit F6 family. Component of the ATP synthase complex composed at least of ATP5F1A/subunit alpha, ATP5F1B/subunit beta, ATP5MC1/subunit c (homooctomer), MT-ATP6/subunit a, MT-ATP8/subunit 8, ATP5ME/subunit e, ATP5MF/subunit f, ATP5MG/subunit g, ATP5MK/subunit k, ATP5MJ/subunit j, ATP5F1C/subunit gamma, ATP5F1D/subunit delta, ATP5F1E/subunit epsilon, ATP5PF/subunit F6, ATP5PB/subunit b, ATP5PD/subunit d, ATP5PO/subunit OSCP. ATP synthase complex consists of a soluble F(1) head domain (subunits alpha(3) and beta(3)) - the catalytic core - and a membrane F(0) domain - the membrane proton channel (subunits c, a, 8, e, f, g, k and j). These two domains are linked by a central stalk (subunits gamma, delta, and epsilon) rotating inside the F1 region and a stationary peripheral stalk (subunits F6, b, d, and OSCP).

The protein localises to the mitochondrion. It localises to the mitochondrion inner membrane. In terms of biological role, subunit F6, of the mitochondrial membrane ATP synthase complex (F(1)F(0) ATP synthase or Complex V) that produces ATP from ADP in the presence of a proton gradient across the membrane which is generated by electron transport complexes of the respiratory chain. ATP synthase complex consist of a soluble F(1) head domain - the catalytic core - and a membrane F(1) domain - the membrane proton channel. These two domains are linked by a central stalk rotating inside the F(1) region and a stationary peripheral stalk. During catalysis, ATP synthesis in the catalytic domain of F(1) is coupled via a rotary mechanism of the central stalk subunits to proton translocation. In vivo, can only synthesize ATP although its ATP hydrolase activity can be activated artificially in vitro. Part of the complex F(0) domain. Part of the complex F(0) domain and the peripheric stalk, which acts as a stator to hold the catalytic alpha(3)beta(3) subcomplex and subunit a/ATP6 static relative to the rotary elements. This chain is ATP synthase peripheral stalk subunit F6, mitochondrial, found in Pongo abelii (Sumatran orangutan).